Here is a 158-residue protein sequence, read N- to C-terminus: Pyruvoyl-dependent arginine decarboxylase (158 aa).

S44 is subject to Pyruvic acid (Ser).

Belongs to the PdaD family. Pyruvate serves as cofactor.

It carries out the reaction L-arginine + H(+) = agmatine + CO2. This chain is Pyruvoyl-dependent arginine decarboxylase, found in Pyrococcus abyssi (strain GE5 / Orsay).